The following is a 173-amino-acid chain: Inorganic pyrophosphatase (173 aa).

Substrate contacts are provided by lysine 29, arginine 43, and tyrosine 55. Mg(2+) contacts are provided by aspartate 65, aspartate 70, and aspartate 102. Residue tyrosine 141 participates in substrate binding.

This sequence belongs to the PPase family. In terms of assembly, homohexamer. Mg(2+) is required as a cofactor.

It localises to the cytoplasm. It carries out the reaction diphosphate + H2O = 2 phosphate + H(+). Catalyzes the hydrolysis of inorganic pyrophosphate (PPi) forming two phosphate ions. This chain is Inorganic pyrophosphatase, found in Rickettsia felis (strain ATCC VR-1525 / URRWXCal2) (Rickettsia azadi).